A 53-amino-acid polypeptide reads, in one-letter code: Photosystem II reaction center protein K (53 aa).

The propeptide occupies 1–16; sequence MFYTNVETLLNTNCFA. A helical transmembrane segment spans residues 28-48; it reads LVDVLPIIPLLFLLLAFVWQA.

Belongs to the PsbK family. In terms of assembly, PSII is composed of 1 copy each of membrane proteins PsbA, PsbB, PsbC, PsbD, PsbE, PsbF, PsbH, PsbI, PsbJ, PsbK, PsbL, PsbM, PsbT, PsbY, PsbZ, Psb30/Ycf12, at least 3 peripheral proteins of the oxygen-evolving complex and a large number of cofactors. It forms dimeric complexes.

The protein resides in the plastid. It localises to the chloroplast thylakoid membrane. Functionally, one of the components of the core complex of photosystem II (PSII). PSII is a light-driven water:plastoquinone oxidoreductase that uses light energy to abstract electrons from H(2)O, generating O(2) and a proton gradient subsequently used for ATP formation. It consists of a core antenna complex that captures photons, and an electron transfer chain that converts photonic excitation into a charge separation. In Euglena anabaena (Euglenaria anabaena), this protein is Photosystem II reaction center protein K.